The primary structure comprises 451 residues: NADP-specific glutamate dehydrogenase (451 aa).

Residue K114 is part of the active site.

Belongs to the Glu/Leu/Phe/Val dehydrogenases family. Homohexamer.

It carries out the reaction L-glutamate + NADP(+) + H2O = 2-oxoglutarate + NH4(+) + NADPH + H(+). The protein is NADP-specific glutamate dehydrogenase (GDH2) of Fusarium fujikuroi (Bakanae and foot rot disease fungus).